The sequence spans 555 residues: Formate--tetrahydrofolate ligase (555 aa).

65–72 (TPAGEGKS) contributes to the ATP binding site.

Belongs to the formate--tetrahydrofolate ligase family.

It carries out the reaction (6S)-5,6,7,8-tetrahydrofolate + formate + ATP = (6R)-10-formyltetrahydrofolate + ADP + phosphate. Its pathway is one-carbon metabolism; tetrahydrofolate interconversion. The sequence is that of Formate--tetrahydrofolate ligase from Staphylococcus haemolyticus (strain JCSC1435).